Consider the following 430-residue polypeptide: Transcobalamin-2 (430 aa).

Positions Met-1–Ala-18 are cleaved as a signal peptide. Disulfide bonds link Cys-21–Cys-270, Cys-116–Cys-312, and Cys-165–Cys-208. Residues Thr-152–Gln-156, His-193, His-193–Asp-197, Asn-245, Ser-248, Gln-294, and Trp-398–Leu-400 contribute to the cob(II)alamin site.

This sequence belongs to the eukaryotic cobalamin transport proteins family. Interacts with CD320 (via LDL-receptor class A domains).

The protein resides in the secreted. Its function is as follows. Primary vitamin B12-binding and transport protein. Delivers cobalamin to cells. The protein is Transcobalamin-2 (Tcn2) of Mus musculus (Mouse).